The sequence spans 325 residues: Adenine deaminase (325 aa).

Residues H8, H10, and H186 each contribute to the Zn(2+) site. The Proton donor role is filled by E189. Residue D267 coordinates Zn(2+). D268 provides a ligand contact to substrate.

Belongs to the metallo-dependent hydrolases superfamily. Adenosine and AMP deaminases family. Adenine deaminase type 2 subfamily. Zn(2+) serves as cofactor.

The enzyme catalyses adenine + H2O + H(+) = hypoxanthine + NH4(+). Functionally, catalyzes the hydrolytic deamination of adenine to hypoxanthine. Plays an important role in the purine salvage pathway and in nitrogen catabolism. This is Adenine deaminase from Chelativorans sp. (strain BNC1).